Reading from the N-terminus, the 851-residue chain is Putative mediator of RNA polymerase II transcription subunit 15 (851 aa).

Disordered stretches follow at residues 79 to 212 (AQAG…NTVY) and 299 to 368 (QQQQ…NNTH). The segment covering 98–141 (ITPLIQQPITPVQQQVPPQKQPQPVYNQQQNQQQNQNQYTTTYP) has biased composition (low complexity). Residues 145 to 154 (TPQQSNTPPI) are compositionally biased toward polar residues. The segment covering 155–212 (SNNNSNNNSNNNLNNNNNNNINNNNNNNNNNNNNNNNNNNNNNNNNNNNNNNNNNTVY) has biased composition (low complexity). The stretch at 231–307 (QLYLQQQQQL…QQQQQQQHQQ (77 aa)) forms a coiled coil. A compositionally biased stretch (polar residues) spans 308–319 (PVQMPSGVTTNK). Residues 320–358 (QSPQPQNTPLTPQQQQQLLAAQQSHAQAQANQNQQLQNP) show a composition bias toward low complexity. Over residues 359-368 (KRISSTNNTH) the composition is skewed to polar residues. A coiled-coil region spans residues 790 to 827 (LKDLESKMNKEFENSNDLNQLNNNINNNNNNNNSFSDN).

It belongs to the Mediator complex subunit 15 family. Component of the Mediator complex.

It is found in the cytoplasm. The protein localises to the nucleus. Its function is as follows. Component of the Mediator complex, a coactivator involved in the regulated transcription of nearly all RNA polymerase II-dependent genes. Mediator functions as a bridge to convey information from gene-specific regulatory proteins to the basal RNA polymerase II transcription machinery. Mediator is recruited to promoters by direct interactions with regulatory proteins and serves as a scaffold for the assembly of a functional preinitiation complex with RNA polymerase II and the general transcription factors. In Dictyostelium discoideum (Social amoeba), this protein is Putative mediator of RNA polymerase II transcription subunit 15 (med15).